The primary structure comprises 356 residues: Glutamine synthetase PR-1 (356 aa).

Residues V19–G99 form the GS beta-grasp domain. The tract at residues P41–P64 is disordered. Residues K106–P356 enclose the GS catalytic domain.

Belongs to the glutamine synthetase family. As to quaternary structure, homooctamer. Roots.

The protein resides in the cytoplasm. The enzyme catalyses L-glutamate + NH4(+) + ATP = L-glutamine + ADP + phosphate + H(+). The protein is Glutamine synthetase PR-1 of Phaseolus vulgaris (Kidney bean).